A 245-amino-acid polypeptide reads, in one-letter code: Protein OXIDATIVE STRESS 3 LIKE 6 (245 aa).

Residues 46-90 (QIGIGLRMSNNNNKSPEESSDSSSSIGESSENEEEEEEDDAVSCQ) are disordered. Positions 75 to 86 (SENEEEEEEDDA) are enriched in acidic residues. The Nuclear localization signal signature appears at 143 to 151 (NKRRRLVIA). The tract at residues 203–230 (DDHRKIMMMMKNKKELMAQTRSCFCLSS) is kinase-inducible domain (KID).

It localises to the nucleus. Its function is as follows. Probable transcription factor. Promotes slightly the tolerance to cadmium (Cd) and to oxidizing chemicals (e.g. diamide). The polypeptide is Protein OXIDATIVE STRESS 3 LIKE 6 (Arabidopsis thaliana (Mouse-ear cress)).